Here is a 486-residue protein sequence, read N- to C-terminus: Vesicular GABA transporter (486 aa).

Topologically, residues 1-93 (MASNRFQNLQ…EASEPISALQ (93 aa)) are cytoplasmic. Over residues 29–46 (LNEVPSYQNQPQTGESGS) the composition is skewed to polar residues. Residues 29–85 (LNEVPSYQNQPQTGESGSNPPPHDRLEPIQESVVSEQPQKDDINKQEEAKDDGHGEA) are disordered. A compositionally biased stretch (basic and acidic residues) spans 66–85 (PQKDDINKQEEAKDDGHGEA). The helical transmembrane segment at 94–114 (AAWNVTNAIQGMFIVGLPIAV) threads the bilayer. The Lumenal, vesicle portion of the chain corresponds to 115 to 119 (KVGGW). Residues 120 to 140 (WSIGAMVGVAYVCYWTGVLLI) form a helical membrane-spanning segment. At 141 to 167 (ECLYENGVKKRKTYREIADFYKPGFGK) the chain is on the cytoplasmic side. A helical membrane pass occupies residues 168–188 (WVLAAQLTELLSTCIIYLVLA). The Lumenal, vesicle segment spans residues 189 to 203 (ADLLQSCFPSVDKAG). A helical transmembrane segment spans residues 204 to 224 (WMMITSASLLTCSFLDDLQIV). Residues 225 to 228 (SRLS) are Cytoplasmic-facing. The chain crosses the membrane as a helical span at residues 229 to 249 (FFNAISHLIVNLIMVLYCLSF). Over 250–263 (VSQWSFSTITFSLN) the chain is Lumenal, vesicle. The chain crosses the membrane as a helical span at residues 264 to 284 (INTLPTIVGMVVFGYTSHIFL). Topologically, residues 285–305 (PNLEGNMKNPAQFNVMLKWSH) are cytoplasmic. A helical transmembrane segment spans residues 306 to 326 (IAAAVFKVVFGMLGFLTFGEL). Over 327–341 (TQEEISNSLPNQSFK) the chain is Lumenal, vesicle. Asn337 carries an N-linked (GlcNAc...) asparagine glycan. A helical membrane pass occupies residues 342-362 (ILVNLILVVKALLSYPLPFYA). Residues 363–398 (AVQLLKNNLFLGYPQTPFTSCYSPDKSLREWAVTLR) are Cytoplasmic-facing. A helical transmembrane segment spans residues 399 to 419 (IILVLFTLFVALSVPYLVELM). Topologically, residues 420 to 421 (GL) are lumenal, vesicle. The chain crosses the membrane as a helical span at residues 422-442 (VGNITGTMLSFIWPALFHLYI). The Cytoplasmic segment spans residues 443-457 (KEKTLNNFEKRFDQG). The helical transmembrane segment at 458-478 (IIIMGCSVCISGVYFSSMELL) threads the bilayer. The Lumenal, vesicle portion of the chain corresponds to 479-486 (RAINSADS).

It belongs to the amino acid/polyamine transporter 2 family.

Its subcellular location is the cytoplasmic vesicle membrane. Its function is as follows. Involved in the uptake of GABA into the synaptic vesicles. The protein is Vesicular GABA transporter (unc-47) of Caenorhabditis elegans.